The primary structure comprises 146 residues: MAIYGIGTDIVQVSRVAAVLERTGGRFAEKVLGPDELRVFHARRARSEARGIAFLATRFSAKEAFSKAIGLGMHWPMTWRALQTLNRPSGEPYVVASGELADWLAARGITARVTVSDERDYAVSFVIAETGLPAPDAPTAVSRTTP.

The Mg(2+) site is built by Asp9 and Glu63.

The protein belongs to the P-Pant transferase superfamily. AcpS family. Requires Mg(2+) as cofactor.

Its subcellular location is the cytoplasm. The enzyme catalyses apo-[ACP] + CoA = holo-[ACP] + adenosine 3',5'-bisphosphate + H(+). Transfers the 4'-phosphopantetheine moiety from coenzyme A to a Ser of acyl-carrier-protein. The polypeptide is Holo-[acyl-carrier-protein] synthase (Burkholderia multivorans (strain ATCC 17616 / 249)).